The following is a 255-amino-acid chain: Small ribosomal subunit protein uS2 (255 aa).

Residues 226–255 (QGVSNEEVAAEQNIDLDEKEKSEETEATEE) form a disordered region.

The protein belongs to the universal ribosomal protein uS2 family.

This is Small ribosomal subunit protein uS2 from Staphylococcus aureus (strain JH1).